The chain runs to 234 residues: Endonuclease NucS (234 aa).

Belongs to the NucS endonuclease family.

It is found in the cytoplasm. In terms of biological role, cleaves both 3' and 5' ssDNA extremities of branched DNA structures. The sequence is that of Endonuclease NucS from Bifidobacterium animalis subsp. lactis (strain AD011).